The sequence spans 384 residues: Early estrogen-induced gene 1 protein (384 aa).

Residues 2 to 145 (AFLMKKKKFK…ILKVTIGMFL (144 aa)) form the C2 NT-type domain. The interval 129 to 138 (NTRQDNSILK) is required for interaction with TNFRSF11A/RANK. The segment at 173–315 (LTCKGGGTSS…RRKKDSVESH (143 aa)) is disordered. The span at 183-193 (GGSSTNSLTGS) shows a compositional bias: low complexity. Residues 227–254 (SRNSSYASQQSKISGYSTEHSRSSSLSD) show a composition bias toward polar residues. 2 stretches are compositionally biased toward basic and acidic residues: residues 280-292 (GSEREHRPPEKPP) and 299-315 (HLSDRSFRRKKDSVESH).

It belongs to the EEIG family. As to quaternary structure, part of a complex composed of EEIG1, TNFRSF11A/RANK, PLCG2, GAB2, TEC and BTK; complex formation increases in the presence of TNFSF11/RANKL. Interacts with PRDM1/BLIMP1; following TNFSF11/RANKL stimulation in bone marrow-derived macrophages, the interaction promotes the binding of PRDM1/BLIMP1 to the gene promoter of IRF8.

The protein localises to the nucleus. Its subcellular location is the cytoplasm. It localises to the membrane raft. Functionally, key component of TNFSF11/RANKL- and TNF-induced osteoclastogenesis pathways, thereby mediates bone resorption in pathological bone loss conditions. Required for TNFSF11/RANKL-induced osteoclastogenesis via its interaction with TNFRSF11A/RANK, thereby facilitates the downsteam transcription of NFATC1 and activation of PLCG2. Facilitates recruitment of the transcriptional repressor PRDM1/BLIMP1 to the promoter of the anti-osteoclastogenesis gene IRF8, thereby resulting in transcription of osteoclast differentiation factors. May play a role in estrogen action. This is Early estrogen-induced gene 1 protein from Homo sapiens (Human).